Consider the following 704-residue polypeptide: Polyribonucleotide nucleotidyltransferase (704 aa).

Mg(2+) contacts are provided by Asp-485 and Asp-491. Residues 552 to 611 (PKTETIQIDPDKIRSVIGAGGKVINKIIQDTGVKIDIKEDGSVFVSSSDHAGVKEAIKII) enclose the KH domain. The region spanning 621 to 689 (GEIYLGKVTK…SQGRINLSRK (69 aa)) is the S1 motif domain.

It belongs to the polyribonucleotide nucleotidyltransferase family. It depends on Mg(2+) as a cofactor.

The protein resides in the cytoplasm. The enzyme catalyses RNA(n+1) + phosphate = RNA(n) + a ribonucleoside 5'-diphosphate. In terms of biological role, involved in mRNA degradation. Catalyzes the phosphorolysis of single-stranded polyribonucleotides processively in the 3'- to 5'-direction. The protein is Polyribonucleotide nucleotidyltransferase of Clostridium botulinum (strain Eklund 17B / Type B).